The following is a 361-amino-acid chain: D-alanine--D-alanine ligase (361 aa).

In terms of domain architecture, ATP-grasp spans 134 to 344 (KILAQRAGVP…YTDLITKLID (211 aa)). 169-224 (ASQLGSDLFVKPSNQGSSVGVSHVTNEKEYKVALAEAFKYDDKVLVEETVHGTEVE) serves as a coordination point for ATP. Residues Asp297, Glu311, and Asn313 each contribute to the Mg(2+) site.

The protein belongs to the D-alanine--D-alanine ligase family. Mg(2+) is required as a cofactor. Mn(2+) serves as cofactor.

The protein localises to the cytoplasm. It catalyses the reaction 2 D-alanine + ATP = D-alanyl-D-alanine + ADP + phosphate + H(+). The protein operates within cell wall biogenesis; peptidoglycan biosynthesis. Its function is as follows. Cell wall formation. In Lactobacillus johnsonii (strain CNCM I-12250 / La1 / NCC 533), this protein is D-alanine--D-alanine ligase.